A 415-amino-acid chain; its full sequence is MEELSMANTMFALNLLKQIEKSNSTQNIFISPWSISSTLAIVLLGAGGNTEQQMAKVLQFNEIGSYGITTRNPENFSGCDFAQQIQKENYPSAILQAQAGDKIHSAFSSLSSTINTPQGDYLLESANKLFGEKSARFKEEYIQLSKKYYSTEPEAVDFLECAEEAREKINSWVKTQTKGEIPNLLPEGSVDEDTKMVLVNAVYFKGKWKTPFEKKLNGLYPFRVNSHESIPVQMMFLHAKLNIGYIKDLKTQILELPHTGNISMLLLLPDEIEDASTGLELLESEINFANFNKWISKDTLDEDDVVVYIPKFKLAQSYELKSILQSMGMEDAFNKGKANFSGMSERNDLFLSEVFHQASVDVTEEGTVAAGGTGAVMTGRTGHGGPQFVADHPFLFFIMDKITHTILFVGRFSSP.

4 N-linked (GlcNAc...) asparagine glycosylation sites follow: Asn-23, Asn-75, Asn-261, and Asn-339.

This sequence belongs to the serpin family. Ov-serpin subfamily. As to quaternary structure, interacts with PSMB1. The signal sequence is not cleaved.

The protein localises to the cytoplasm. It localises to the secreted. It is found in the extracellular space. Inhibits urokinase-type plasminogen activator. The monocyte derived PAI-2 is distinct from the endothelial cell-derived PAI-1. Not required for normal murine development or survival. The chain is Plasminogen activator inhibitor 2, macrophage (Serpinb2) from Mus musculus (Mouse).